The chain runs to 246 residues: Osmotin-like protein OSML13 (246 aa).

A signal peptide spans 1–21 (MAYLRSSFVFFLLAFVTYTYA). 8 disulfide bridges follow: Cys30/Cys225, Cys72/Cys82, Cys87/Cys93, Cys141/Cys213, Cys146/Cys196, Cys154/Cys164, Cys168/Cys177, and Cys178/Cys183.

The protein belongs to the thaumatin family.

This chain is Osmotin-like protein OSML13, found in Solanum commersonii (Commerson's wild potato).